The chain runs to 163 residues: MADARRAPLKDQTDVSGARVLIVEARFYDDIQDALLEGAVAELKAAGATHDVLTVPGALEIPAAVAIAIDSAEAAGKPYDAAIALGCVVRGETIHFEIVSMESARALMDLSVARKFPLGNGIITVNTDEQAWARAKPGDLNKGGDAARAALAMLRIKRRLAKA.

Residues F27, A58–E60, and C87–V89 each bind 5-amino-6-(D-ribitylamino)uracil. E92 to T93 is a binding site for (2S)-2-hydroxy-3-oxobutyl phosphate. H95 serves as the catalytic Proton donor. N120 lines the 5-amino-6-(D-ribitylamino)uracil pocket. A (2S)-2-hydroxy-3-oxobutyl phosphate-binding site is contributed by R134.

The protein belongs to the DMRL synthase family.

The catalysed reaction is (2S)-2-hydroxy-3-oxobutyl phosphate + 5-amino-6-(D-ribitylamino)uracil = 6,7-dimethyl-8-(1-D-ribityl)lumazine + phosphate + 2 H2O + H(+). The protein operates within cofactor biosynthesis; riboflavin biosynthesis; riboflavin from 2-hydroxy-3-oxobutyl phosphate and 5-amino-6-(D-ribitylamino)uracil: step 1/2. Its function is as follows. Catalyzes the formation of 6,7-dimethyl-8-ribityllumazine by condensation of 5-amino-6-(D-ribitylamino)uracil with 3,4-dihydroxy-2-butanone 4-phosphate. This is the penultimate step in the biosynthesis of riboflavin. This Rhodopseudomonas palustris (strain ATCC BAA-98 / CGA009) protein is 6,7-dimethyl-8-ribityllumazine synthase 1.